The primary structure comprises 193 residues: Potassium-transporting ATPase KdpC subunit (193 aa).

A helical membrane pass occupies residues 7–27 (PLVVIFAVLTVVTGMAYPAVM).

It belongs to the KdpC family. As to quaternary structure, the system is composed of three essential subunits: KdpA, KdpB and KdpC.

It is found in the cell inner membrane. Part of the high-affinity ATP-driven potassium transport (or Kdp) system, which catalyzes the hydrolysis of ATP coupled with the electrogenic transport of potassium into the cytoplasm. This subunit acts as a catalytic chaperone that increases the ATP-binding affinity of the ATP-hydrolyzing subunit KdpB by the formation of a transient KdpB/KdpC/ATP ternary complex. In Burkholderia vietnamiensis (strain G4 / LMG 22486) (Burkholderia cepacia (strain R1808)), this protein is Potassium-transporting ATPase KdpC subunit.